The following is a 962-amino-acid chain: Leucine--tRNA ligase (962 aa).

The 'HIGH' region signature appears at 41–51 (PYLNGNLHAGH). A 'KMSKS' region motif is present at residues 631–635 (KMSKS). K634 serves as a coordination point for ATP.

This sequence belongs to the class-I aminoacyl-tRNA synthetase family.

It localises to the cytoplasm. It catalyses the reaction tRNA(Leu) + L-leucine + ATP = L-leucyl-tRNA(Leu) + AMP + diphosphate. The polypeptide is Leucine--tRNA ligase (Methanococcoides burtonii (strain DSM 6242 / NBRC 107633 / OCM 468 / ACE-M)).